A 344-amino-acid chain; its full sequence is Dihydroorotase (344 aa).

Zn(2+) contacts are provided by His13 and His15. Substrate-binding positions include 15–17 (HVR) and Asn41. Lys99, His136, and His174 together coordinate Zn(2+). An N6-carboxylysine modification is found at Lys99. Residue His136 coordinates substrate. Residue Leu219 participates in substrate binding. Asp247 is a binding site for Zn(2+). Asp247 is a catalytic residue. Substrate is bound by residues His251 and Ala263.

Belongs to the metallo-dependent hydrolases superfamily. DHOase family. Class II DHOase subfamily. As to quaternary structure, homodimer. Zn(2+) serves as cofactor.

It catalyses the reaction (S)-dihydroorotate + H2O = N-carbamoyl-L-aspartate + H(+). The protein operates within pyrimidine metabolism; UMP biosynthesis via de novo pathway; (S)-dihydroorotate from bicarbonate: step 3/3. In terms of biological role, catalyzes the reversible cyclization of carbamoyl aspartate to dihydroorotate. This is Dihydroorotase from Azoarcus sp. (strain BH72).